The primary structure comprises 679 residues: Penicillin-binding protein PbpB (679 aa).

The disordered stretch occupies residues 1–74; the sequence is MSRAAPRRAS…STRARRTRQV (74 aa). Residues 1 to 90 are Cytoplasmic-facing; it reads MSRAAPRRAS…GASFVFRHRT (90 aa). Positions 42–54 are enriched in polar residues; that stretch reads ARQAQEATKSRPA. A helical membrane pass occupies residues 91 to 111; the sequence is GNAVILVLMLVAATQLFFLQV. Topologically, residues 112-679 are extracellular; sequence SHAAGLRAQA…PGPPLVLQAT (568 aa). Residue serine 386 is the Acyl-ester intermediate of the active site.

It belongs to the transpeptidase family. As to quaternary structure, interacts with Wag31. Cleaved by Rip1 in response to oxidative stress (H(2)O(2)), prevented by Wag31. Cleavage probably occurs near residues 102-103.

It localises to the cell membrane. Its pathway is cell wall biogenesis; peptidoglycan biosynthesis. Synthesis of cross-linked peptidoglycan from the lipid intermediates. In Mycobacterium tuberculosis (strain ATCC 25618 / H37Rv), this protein is Penicillin-binding protein PbpB (pbpB).